The following is a 209-amino-acid chain: Ribosomal RNA large subunit methyltransferase E (209 aa).

5 residues coordinate S-adenosyl-L-methionine: Gly63, Trp65, Asp83, Asp99, and Asp124. Catalysis depends on Lys164, which acts as the Proton acceptor.

This sequence belongs to the class I-like SAM-binding methyltransferase superfamily. RNA methyltransferase RlmE family.

The protein localises to the cytoplasm. It carries out the reaction uridine(2552) in 23S rRNA + S-adenosyl-L-methionine = 2'-O-methyluridine(2552) in 23S rRNA + S-adenosyl-L-homocysteine + H(+). In terms of biological role, specifically methylates the uridine in position 2552 of 23S rRNA at the 2'-O position of the ribose in the fully assembled 50S ribosomal subunit. In Aliivibrio salmonicida (strain LFI1238) (Vibrio salmonicida (strain LFI1238)), this protein is Ribosomal RNA large subunit methyltransferase E.